We begin with the raw amino-acid sequence, 189 residues long: UPF0301 protein bbp_491 (189 aa).

Belongs to the UPF0301 (AlgH) family.

The chain is UPF0301 protein bbp_491 from Buchnera aphidicola subsp. Baizongia pistaciae (strain Bp).